Reading from the N-terminus, the 477-residue chain is Adenylyl cyclase-associated protein 2 (477 aa).

The residue at position 2 (Ala-2) is an N-acetylalanine. Disordered stretches follow at residues 224–261 (VLSS…PSRS) and 274–323 (TKGL…KHAP). Over residues 230 to 246 (GLPPPPPPPPPPGPPPL) the composition is skewed to pro residues. Residues Ser-301 and Ser-309 each carry the phosphoserine modification. A compositionally biased stretch (low complexity) spans 301–320 (SPTKSHTPSPTSPKSYPSQK). The C-CAP/cofactor C-like domain occupies 317-455 (PSQKHAPVLE…QDGDYREFPI (139 aa)).

It belongs to the CAP family.

Its subcellular location is the cell membrane. Its function is as follows. Involved in the regulation of actin polymerization. The chain is Adenylyl cyclase-associated protein 2 (CAP2) from Pongo abelii (Sumatran orangutan).